Reading from the N-terminus, the 123-residue chain is Large ribosomal subunit protein uL14c (123 aa).

The protein belongs to the universal ribosomal protein uL14 family. Part of the 50S ribosomal subunit.

It localises to the plastid. Its subcellular location is the chloroplast. Binds to 23S rRNA. This Lolium perenne (Perennial ryegrass) protein is Large ribosomal subunit protein uL14c.